Consider the following 74-residue polypeptide: U-actitoxin-Bgr3a (74 aa).

Positions 1–21 (MSAQRFLFLLVVTSLIAASLA) are cleaved as a signal peptide. The propeptide occupies 22–29 (APKDVQLT). 3 disulfide bridges follow: Cys-35-Cys-68, Cys-37-Cys-61, and Cys-51-Cys-69.

This sequence belongs to the sea anemone type 3 (BDS) potassium channel toxin family.

It localises to the secreted. Its subcellular location is the nematocyst. In terms of biological role, potently and selectively inhibits voltage-gated potassium channels Kv11/KCNH/ERG. Acts as a gating-modifier toxin that shifts the voltage-dependence of ERG activation in the positive direction and suppresses its current amplitudes elicited by strong depolarizing pulses that maximally activate the channels. This Bunodosoma granuliferum (Red warty sea anemone) protein is U-actitoxin-Bgr3a.